The sequence spans 354 residues: Isopentenyl-diphosphate delta-isomerase (354 aa).

A substrate-binding site is contributed by K11–K12. FMN-binding positions include S67, S68–T70, S98, and N126. Residue S98–K100 coordinates substrate. Q160 lines the substrate pocket. E161 serves as a coordination point for Mg(2+). FMN contacts are provided by residues K192, T222, and A289–A290.

It belongs to the IPP isomerase type 2 family. In terms of assembly, homooctamer. Dimer of tetramers. FMN is required as a cofactor. Requires NADPH as cofactor. The cofactor is Mg(2+).

The protein localises to the cytoplasm. It catalyses the reaction isopentenyl diphosphate = dimethylallyl diphosphate. In terms of biological role, involved in the biosynthesis of isoprenoids. Catalyzes the 1,3-allylic rearrangement of the homoallylic substrate isopentenyl (IPP) to its allylic isomer, dimethylallyl diphosphate (DMAPP). This Borreliella afzelii (strain PKo) (Borrelia afzelii) protein is Isopentenyl-diphosphate delta-isomerase.